The following is a 327-amino-acid chain: Probable cell division protein WhiA (327 aa).

The segment at residues 275–308 is a DNA-binding region (H-T-H motif); that stretch reads SLEELGRLADPVMTKDAVAGRIRRLLSMADRKAK. The tract at residues 307–327 is disordered; it reads AKTEGIPDTESAVTPELLEEA.

Belongs to the WhiA family.

Functionally, involved in cell division and chromosome segregation. This is Probable cell division protein WhiA from Mycobacteroides abscessus (strain ATCC 19977 / DSM 44196 / CCUG 20993 / CIP 104536 / JCM 13569 / NCTC 13031 / TMC 1543 / L948) (Mycobacterium abscessus).